The primary structure comprises 804 residues: MPEILINKPVEDELVESYLLYSMSVIVGRAIPDVRDGLKPVQRRILYGMYELGLKHNSPTKKSARIVGEVMGKYHPHGDAPVYDALVRMAQPFTMRYPLIEGQGNFGSIDRDPPAAMRYTEARLTRLAEEMLEDIEKNTVNMIDNFDGTLKEPEVLPSKVPNLIINGASGIAVGMATNIPPHNLSETVDALIYLIDHPEATVEELMQFIKGPDFPTGAVVVNASELKKVYEEGRGRIIVRGKVHVEDGKRVKRIVITEIPYGVSKAGLIEQIAKIAKDDESLPIRNIRDESDKRGMRIVIEIPKDANEEVIINNLYKRTALQDYFNVQMLVIDKHKRPRLMNLKGLMEAFLEHRFEVIRRRARYEYEQYTRRAHVVEGLLKAARAIGVVVDIVRNSKDVESARQSLMETLEITEEQAKAILDMRLSRLTSLEIENLQNEYSDLVRKISEVKEILEKDEKVKEIMKKEFLYLKQQYGDPRRTEVTDQSIEYNEEELIVEEDVVITLSHKGYLKSTPLNSYRSQKRGGKGITVSKLSEDDEVEFVVVAKNTSSTLFITNLGRAYVLKNYQLETTGRNTRGRHITAFLNLEDTEKIVALASLNGEGRDLVIATKSGKIKRTALKEFENATSNRGVRAIKIEPGDEIVSARVVNSEKETLIVATKMGMAIRFPVSDVRRMGRNAAGVQAIKLQPGDEVVSVDVIPPGEEGEILTVTEKGFGKRTPVQLYRIQRRGGTGLRNISDVNKTGYVVAVRYVRGDEEIVVVTRNGMMIRFPVSEIGVIGRVTKGVKLIELGDDTISKVAVVKD.

In terms of domain architecture, Topo IIA-type catalytic spans 31-495 (IPDVRDGLKP…QSIEYNEEEL (465 aa)). The active-site O-(5'-phospho-DNA)-tyrosine intermediate is tyrosine 119. Positions 522-528 (QKRGGKG) match the GyrA-box motif.

This sequence belongs to the type II topoisomerase GyrA/ParC subunit family. In terms of assembly, heterotetramer, composed of two GyrA and two GyrB chains. In the heterotetramer, GyrA contains the active site tyrosine that forms a transient covalent intermediate with DNA, while GyrB binds cofactors and catalyzes ATP hydrolysis.

Its subcellular location is the cytoplasm. It carries out the reaction ATP-dependent breakage, passage and rejoining of double-stranded DNA.. In terms of biological role, a type II topoisomerase that negatively supercoils closed circular double-stranded (ds) DNA in an ATP-dependent manner to modulate DNA topology and maintain chromosomes in an underwound state. Negative supercoiling favors strand separation, and DNA replication, transcription, recombination and repair, all of which involve strand separation. Also able to catalyze the interconversion of other topological isomers of dsDNA rings, including catenanes and knotted rings. Type II topoisomerases break and join 2 DNA strands simultaneously in an ATP-dependent manner. In Thermotoga maritima (strain ATCC 43589 / DSM 3109 / JCM 10099 / NBRC 100826 / MSB8), this protein is DNA gyrase subunit A.